Consider the following 889-residue polypeptide: TATA box-binding protein-associated factor RNA polymerase I subunit B (889 aa).

The segment at M1–L33 adopts an RRN7-type zinc-finger fold. Zn(2+) is bound by residues C9, C12, C26, and C29. The B-reader stretch occupies residues N35–N101. The tract at residues D102–D113 is B-linker. The tract at residues Y114–A351 is N-terminal cyclin fold. A disordered region spans residues N229–L253. The segment covering L230–N243 has biased composition (acidic residues). The C-terminal cyclin fold stretch occupies residues M352–I510.

Belongs to the RRN7/TAF1B family.

The protein resides in the nucleus. It localises to the nucleolus. In terms of biological role, component of RNA polymerase I core factor complex that acts as a GTF2B/TFIIB-like factor and plays a key role in multiple steps during transcription initiation such as pre-initiation complex (PIC) assembly and postpolymerase recruitment events in polymerase I (Pol I) transcription. Binds rDNA promoters and plays a role in Pol I recruitment. In Caenorhabditis briggsae, this protein is TATA box-binding protein-associated factor RNA polymerase I subunit B.